The sequence spans 452 residues: Phosphatidylinositol N-acetylglucosaminyltransferase GPI3 subunit (452 aa).

Residues 407–427 traverse the membrane as a helical segment; it reads LYLLCGIVEYMLFFLLEWLYP.

This sequence belongs to the glycosyltransferase group 1 family. In terms of assembly, component of the phosphatidylinositol N-acetylglucosaminyltransferase complex composed of at least GPI1, GPI2, GPI3, GPI15, GPI19 and ERI1.

It localises to the endoplasmic reticulum membrane. The catalysed reaction is a 1,2-diacyl-sn-glycero-3-phospho-(1D-myo-inositol) + UDP-N-acetyl-alpha-D-glucosamine = a 6-(N-acetyl-alpha-D-glucosaminyl)-1-(1,2-diacyl-sn-glycero-3-phospho)-1D-myo-inositol + UDP + H(+). It functions in the pathway glycolipid biosynthesis; glycosylphosphatidylinositol-anchor biosynthesis. With respect to regulation, inhibited by Ras, probably via the interaction between RAS2 and ERI1. Its function is as follows. Catalytic subunit in the complex catalyzing the transfer of N-acetylglucosamine from UDP-N-acetylglucosamine to phosphatidylinositol, the first step of GPI biosynthesis. The chain is Phosphatidylinositol N-acetylglucosaminyltransferase GPI3 subunit (SPT14) from Saccharomyces cerevisiae (strain RM11-1a) (Baker's yeast).